Here is a 313-residue protein sequence, read N- to C-terminus: Pantothenate synthetase (313 aa).

Residue 43-50 (MGALHEGH) participates in ATP binding. His-50 serves as the catalytic Proton donor. Gln-75 is a (R)-pantoate binding site. Gln-75 contributes to the beta-alanine binding site. 161 to 164 (GEKD) is a binding site for ATP. Gln-167 serves as a coordination point for (R)-pantoate. ATP-binding positions include Val-190 and 198-201 (LSSR).

The protein belongs to the pantothenate synthetase family. In terms of assembly, homodimer.

It is found in the cytoplasm. It carries out the reaction (R)-pantoate + beta-alanine + ATP = (R)-pantothenate + AMP + diphosphate + H(+). It participates in cofactor biosynthesis; (R)-pantothenate biosynthesis; (R)-pantothenate from (R)-pantoate and beta-alanine: step 1/1. Functionally, catalyzes the condensation of pantoate with beta-alanine in an ATP-dependent reaction via a pantoyl-adenylate intermediate. The chain is Pantothenate synthetase from Mycobacterium sp. (strain KMS).